Reading from the N-terminus, the 89-residue chain is MYSIDITLKLSPIPISVQRKEEAAADALYQTIINAMRSPNPELLELTCEKQTDKKVAVLSDQISAVIVSQKSGAASTGRAPGFVALATE.

Belongs to the UPF0367 family.

This is UPF0367 protein MAE_19160 from Microcystis aeruginosa (strain NIES-843 / IAM M-2473).